Consider the following 242-residue polypeptide: UPF0273 protein TM_0370 (242 aa).

The region spanning 3–242 (KRVKTGIPGM…IYPSEGGEGR (240 aa)) is the KaiC domain. 30-37 (GGPGTGKT) provides a ligand contact to ATP.

It belongs to the UPF0273 family.

This chain is UPF0273 protein TM_0370, found in Thermotoga maritima (strain ATCC 43589 / DSM 3109 / JCM 10099 / NBRC 100826 / MSB8).